Here is a 488-residue protein sequence, read N- to C-terminus: MTLRFYDTASAEVRNFVPLVAGRASLYYCGATVQGMPHVGHIRSAIAFDQLTRWLTHRGLRVTVVRNVTDIDDKILAKSEASFASGFQPEPGEIPGEEWWALAYRYEQEFLKAYDALGVSRPTYEPRATGHIPEMHALIQQLIDRGHAYPALDDSGDVYFDVRSWSKYGALTRQNIDDMQAAADADPRGKRDPRDFALWKGSKEGEPATASWASPWGAGRPGWHLECSAMVTKYLGTEFDIHGGGLDLRFPHHENEMAQSQAAGHPFANFWMHNGMVTYEGEKMSKSIGNTISPAEMLELASPRVVRYYLGQAHYRSILDYRPTSLQEAAAAVERIDGFLAKAVARFGTDFGFVEGDYGPSTGAVEAFYAAMDDDLNVPRALAALHETVRAGNTALADGDDDSARKAMNAVVIMTDVLGLNAVAGSEKTSTREAEALAVLVEAQLAARATARAEKDWSASDAIRDTLNEAGVVVEDGADGPTWSLKRD.

Cys29 contributes to the Zn(2+) binding site. The short motif at 31 to 41 is the 'HIGH' region element; the sequence is ATVQGMPHVGH. 3 residues coordinate Zn(2+): Cys227, His252, and Glu256. Positions 283–287 match the 'KMSKS' region motif; it reads KMSKS. Lys286 contacts ATP.

It belongs to the class-I aminoacyl-tRNA synthetase family. In terms of assembly, monomer. Zn(2+) is required as a cofactor.

It is found in the cytoplasm. The enzyme catalyses tRNA(Cys) + L-cysteine + ATP = L-cysteinyl-tRNA(Cys) + AMP + diphosphate. The chain is Cysteine--tRNA ligase from Pseudarthrobacter chlorophenolicus (strain ATCC 700700 / DSM 12829 / CIP 107037 / JCM 12360 / KCTC 9906 / NCIMB 13794 / A6) (Arthrobacter chlorophenolicus).